The sequence spans 1311 residues: Suppressor of presenilin protein 4 (1311 aa).

Over residues 1–11 (MSSEPTSSIES) the composition is skewed to polar residues. Disordered regions lie at residues 1-58 (MSSE…DDLN) and 75-95 (MFED…STAH). C2H2-type zinc fingers lie at residues 112-134 (HACH…TKMH) and 141-163 (FACE…NNIH). Residues 226–304 (EFDTTPPPIL…PPPVRKDVEK (79 aa)) are disordered. A compositionally biased stretch (low complexity) spans 280 to 293 (SPKGSLPSSSASSV). 4 consecutive C2H2-type zinc fingers follow at residues 327–349 (QRCP…SGGH), 355–379 (YICP…YILH), 451–476 (KKCN…VKTH), and 487–510 (FLCL…LIEH). Residues 544–563 (VKEEPKEADGDESGDESFDS) form a disordered region. Residues 552–561 (DGDESGDESF) are compositionally biased toward acidic residues. 6 C2H2-type zinc fingers span residues 585–607 (FCCN…YDKH), 613–635 (FKCQ…EKLH), 709–731 (FQCT…KKRH), 737–759 (YRCV…LKQH), 794–816 (YCCD…HRNH), and 823–845 (NICS…TIIH). The segment at 865–1002 (RPVSSLTDLN…ESPEPDESVE (138 aa)) is disordered. The segment covering 874-897 (NSEKMNERKSTKRKMLDKVEKMEV) has biased composition (basic and acidic residues). The span at 898 to 907 (GEDEEDDEES) shows a compositional bias: acidic residues. The segment covering 908 to 920 (VDKGTDDGDYKQR) has biased composition (basic and acidic residues). A compositionally biased stretch (polar residues) spans 956–979 (NRINYSLLSKNGSGKPTPSTSSAN). 6 C2H2-type zinc fingers span residues 1022-1044 (LKCP…RYYH), 1053-1075 (YACS…LKLH), 1104-1126 (YYCK…SAYH), 1162-1184 (KYCK…LDRH), 1190-1212 (YKCY…QLNH), and 1261-1284 (LKCP…SVHH).

As to expression, expressed in neurons.

Its subcellular location is the nucleus. Probable transcriptional regulator, which participates in the transcriptional repression of the presenilin protein hop-1. Might play a role in the oxidative stress response. The protein is Suppressor of presenilin protein 4 (spr-4) of Caenorhabditis elegans.